The chain runs to 374 residues: Histidinol-phosphate aminotransferase (374 aa).

Lysine 211 is subject to N6-(pyridoxal phosphate)lysine. Positions 351–368 (GNSSQDSASKSNSSANND) are enriched in low complexity. Positions 351–374 (GNSSQDSASKSNSSANNDELNASN) are disordered.

This sequence belongs to the class-II pyridoxal-phosphate-dependent aminotransferase family. Histidinol-phosphate aminotransferase subfamily. Homodimer. Requires pyridoxal 5'-phosphate as cofactor.

The enzyme catalyses L-histidinol phosphate + 2-oxoglutarate = 3-(imidazol-4-yl)-2-oxopropyl phosphate + L-glutamate. It participates in amino-acid biosynthesis; L-histidine biosynthesis; L-histidine from 5-phospho-alpha-D-ribose 1-diphosphate: step 7/9. The polypeptide is Histidinol-phosphate aminotransferase (Photobacterium profundum (strain SS9)).